Here is a 237-residue protein sequence, read N- to C-terminus: Probable transcriptional regulatory protein EAT1b_0153 (237 aa).

It belongs to the TACO1 family. YeeN subfamily.

It is found in the cytoplasm. In Exiguobacterium sp. (strain ATCC BAA-1283 / AT1b), this protein is Probable transcriptional regulatory protein EAT1b_0153.